The chain runs to 599 residues: Elongation factor 4 (599 aa).

The 183-residue stretch at 2–184 (KHIRNFSIIA…RLVRDIPAPE (183 aa)) folds into the tr-type G domain. GTP contacts are provided by residues 14–19 (DHGKST) and 131–134 (NKID).

Belongs to the TRAFAC class translation factor GTPase superfamily. Classic translation factor GTPase family. LepA subfamily.

It is found in the cell inner membrane. It carries out the reaction GTP + H2O = GDP + phosphate + H(+). Functionally, required for accurate and efficient protein synthesis under certain stress conditions. May act as a fidelity factor of the translation reaction, by catalyzing a one-codon backward translocation of tRNAs on improperly translocated ribosomes. Back-translocation proceeds from a post-translocation (POST) complex to a pre-translocation (PRE) complex, thus giving elongation factor G a second chance to translocate the tRNAs correctly. Binds to ribosomes in a GTP-dependent manner. The sequence is that of Elongation factor 4 from Yersinia pestis bv. Antiqua (strain Antiqua).